The primary structure comprises 179 residues: MAKLHDYYKDEVVKKLMTEFNYNSVMQVPRVEKITLNMGVGEAIADKKLLDNAAADLTAISGQKPLITKARKSVAGFKIRQGYPIGCKVTLRGERMWEFFERLISIAVPRIRDFRGLSAKSFDGRGNYSMGVREQIIFPEIDYDKVDRVRGLDITITTTAKSDEEGRALLTAFNFPFRK.

The protein belongs to the universal ribosomal protein uL5 family. As to quaternary structure, part of the 50S ribosomal subunit; part of the 5S rRNA/L5/L18/L25 subcomplex. Contacts the 5S rRNA and the P site tRNA. Forms a bridge to the 30S subunit in the 70S ribosome.

Functionally, this is one of the proteins that bind and probably mediate the attachment of the 5S RNA into the large ribosomal subunit, where it forms part of the central protuberance. In the 70S ribosome it contacts protein S13 of the 30S subunit (bridge B1b), connecting the 2 subunits; this bridge is implicated in subunit movement. Contacts the P site tRNA; the 5S rRNA and some of its associated proteins might help stabilize positioning of ribosome-bound tRNAs. The protein is Large ribosomal subunit protein uL5 of Edwardsiella ictaluri (strain 93-146).